Here is a 107-residue protein sequence, read N- to C-terminus: Nucleoid-associated protein BAbS19_I00290 (107 aa).

This sequence belongs to the YbaB/EbfC family. Homodimer.

It is found in the cytoplasm. The protein localises to the nucleoid. Its function is as follows. Binds to DNA and alters its conformation. May be involved in regulation of gene expression, nucleoid organization and DNA protection. The protein is Nucleoid-associated protein BAbS19_I00290 of Brucella abortus (strain S19).